We begin with the raw amino-acid sequence, 1493 residues long: Pleckstrin homology domain-containing family H member 2 (1493 aa).

Residues 20 to 175 (LESQLMKFRV…LQEVQGKKSS (156 aa)) are a coiled coil. Disordered regions lie at residues 202 to 230 (SPPQ…DMEE), 245 to 335 (NNRG…SSSI), 363 to 439 (LNSP…LPPP), and 613 to 705 (SSSP…EPLE). Residues 208–230 (KSEEMSKISSKEPEFTEGKDMEE) are compositionally biased toward basic and acidic residues. Polar residues-rich tracts occupy residues 245–260 (NNRG…CGSE) and 267–281 (TSFA…NSGA). Positions 374 to 388 (LSKKEQDSSSDELNK) are enriched in basic and acidic residues. Composition is skewed to polar residues over residues 389–409 (KFQS…TPSP), 421–432 (NSLSGKGTQLVP), and 676–698 (STDT…SSDN). PH domains follow at residues 703-797 (PLEK…NVLR) and 811-919 (KPTM…VAAG). The MyTH4 domain maps to 955-1110 (HSKEGIISPL…PSRMEILSTL (156 aa)). An FERM domain is found at 1121-1451 (FSIPVHFMNG…SYINNFHQQK (331 aa)). The disordered stretch occupies residues 1474–1493 (MMGSQPLLSSSRPTKGPTLL).

Self-associates. Interacts with TGFB1I1. As to expression, kidney. Reduced expression in patients with focal segmental glomerulosclerosis.

The protein localises to the cytoplasm. The protein resides in the cytoskeleton. Its subcellular location is the cell membrane. It localises to the cell projection. It is found in the lamellipodium. Its function is as follows. In the kidney glomerulus may play a role in linking podocyte foot processes to the glomerular basement membrane. May be involved in stabilization of F-actin by attenuating its depolymerization. Can recruit TGFB1I1 from focal adhesions to podocyte lamellipodia. The chain is Pleckstrin homology domain-containing family H member 2 (PLEKHH2) from Homo sapiens (Human).